The sequence spans 475 residues: Ankyrin repeat, SAM and basic leucine zipper domain-containing protein 1 (475 aa).

The disordered stretch occupies residues 1 to 25 (MAAGTLRGLAVAGGGESSDSEDDGW). Ser-17, Ser-18, and Ser-20 each carry phosphoserine. ANK repeat units lie at residues 45–74 (EKNETFKKALTTGDISLVKELLDSGINVDS), 78–107 (YGWTPLMYAASVANAELVRFLLDRGANASF), 110–144 (DKLTILISACSARGSEEQVLKCVELLLSRNADPNT), 148–177 (RLMTPIMYAARDGHTQVVALLVAHGAEVNA), 181–210 (NGYTALTWAARQGHKNVILKLLELGANKML), and 214–243 (DGRTPSEIAKRNKHLEIFNFLSLTLNPLEG). Residues 272–334 (PYTAFGDLEI…KILAALKELE (63 aa)) enclose the SAM domain.

As to quaternary structure, interacts with DDX4, PIWIL1, RANBP9 and TDRD1. In terms of tissue distribution, expressed exclusively in testis and ovary with higher levels in testis.

It localises to the cytoplasm. Its function is as follows. Plays a central role during spermatogenesis by repressing transposable elements and preventing their mobilization, which is essential for the germline integrity. Acts via the piRNA metabolic process, which mediates the repression of transposable elements during meiosis by forming complexes composed of piRNAs and Piwi proteins and governs the methylation and subsequent repression of transposons. Its association with pi-bodies suggests a participation in the primary piRNAs metabolic process. Required prior to the pachytene stage to facilitate the production of multiple types of piRNAs, including those associated with repeats involved in regulation of retrotransposons. May act by mediating protein-protein interactions during germ cell maturation. This chain is Ankyrin repeat, SAM and basic leucine zipper domain-containing protein 1, found in Mus musculus (Mouse).